The chain runs to 103 residues: Truncated secreted TNF-receptor-like protein A53 (103 aa).

One copy of the TNFR-Cys 1 repeat lies at 36–73; that stretch reads SCDKGEYLDKRHNQCCNRCPPGEFAKVRCNGNDNTKCE. 3 cysteine pairs are disulfide-bonded: cysteine 37-cysteine 50, cysteine 51-cysteine 64, and cysteine 54-cysteine 72. The stretch at 74–103 is one TNFR-Cys 2; truncated repeat; that stretch reads RCPPHTYTTIPIILMDVINVENAQQDHLIR.

Belongs to the poxviridae A53R protein family.

The sequence is that of Truncated secreted TNF-receptor-like protein A53 from Vaccinia virus (strain Copenhagen) (VACV).